The chain runs to 348 residues: ECA polysaccharide chain length modulation protein (348 aa).

2 consecutive transmembrane segments (helical) span residues 31–51 (FWIIGIGLLFALIALAYTFFA) and 323–343 (AFLMIMWGIVGALIGAGVALT).

This sequence belongs to the WzzB/Cld/Rol family. As to quaternary structure, probably part of a complex composed of WzxE, WzyE and WzzE.

The protein resides in the cell inner membrane. It participates in bacterial outer membrane biogenesis; enterobacterial common antigen biosynthesis. Functionally, modulates the polysaccharide chain length of enterobacterial common antigen (ECA). This is ECA polysaccharide chain length modulation protein from Salmonella typhimurium (strain LT2 / SGSC1412 / ATCC 700720).